The sequence spans 192 residues: Cell division protein SepF (192 aa).

The interval 15–70 (GDPLEYEEDGEEYEQVYREENKREEARRATAGTAAAATPTAAAQASDAAPMGSGPA) is disordered. A compositionally biased stretch (acidic residues) spans 18 to 28 (LEYEEDGEEYE). The segment covering 29 to 42 (QVYREENKREEARR) has biased composition (basic and acidic residues). The span at 43–63 (ATAGTAAAATPTAAAQASDAA) shows a compositional bias: low complexity.

It belongs to the SepF family. In terms of assembly, homodimer. Interacts with FtsZ.

The protein localises to the cytoplasm. Cell division protein that is part of the divisome complex and is recruited early to the Z-ring. Probably stimulates Z-ring formation, perhaps through the cross-linking of FtsZ protofilaments. Its function overlaps with FtsA. This Gloeobacter violaceus (strain ATCC 29082 / PCC 7421) protein is Cell division protein SepF.